The following is a 134-amino-acid chain: Phosphoribosyl-AMP cyclohydrolase (134 aa).

Aspartate 90 contributes to the Mg(2+) binding site. Cysteine 91 provides a ligand contact to Zn(2+). Mg(2+) is bound by residues aspartate 92 and aspartate 94. Zn(2+) contacts are provided by cysteine 107 and cysteine 114.

The protein belongs to the PRA-CH family. In terms of assembly, homodimer. It depends on Mg(2+) as a cofactor. Zn(2+) serves as cofactor.

The protein resides in the cytoplasm. The catalysed reaction is 1-(5-phospho-beta-D-ribosyl)-5'-AMP + H2O = 1-(5-phospho-beta-D-ribosyl)-5-[(5-phospho-beta-D-ribosylamino)methylideneamino]imidazole-4-carboxamide. It participates in amino-acid biosynthesis; L-histidine biosynthesis; L-histidine from 5-phospho-alpha-D-ribose 1-diphosphate: step 3/9. Catalyzes the hydrolysis of the adenine ring of phosphoribosyl-AMP. This is Phosphoribosyl-AMP cyclohydrolase from Arthrobacter sp. (strain FB24).